A 688-amino-acid chain; its full sequence is DNA ligase (688 aa).

NAD(+) contacts are provided by residues 42-46 (DAEYD), 91-92 (SL), and glutamate 128. Catalysis depends on lysine 130, which acts as the N6-AMP-lysine intermediate. Residues arginine 151, glutamate 188, lysine 305, and lysine 329 each coordinate NAD(+). Zn(2+)-binding residues include cysteine 423, cysteine 426, cysteine 441, and cysteine 447. The region spanning 608–688 (APQGVLAGKT…GMRKLLEGQL (81 aa)) is the BRCT domain.

The protein belongs to the NAD-dependent DNA ligase family. LigA subfamily. The cofactor is Mg(2+). Requires Mn(2+) as cofactor.

It carries out the reaction NAD(+) + (deoxyribonucleotide)n-3'-hydroxyl + 5'-phospho-(deoxyribonucleotide)m = (deoxyribonucleotide)n+m + AMP + beta-nicotinamide D-nucleotide.. DNA ligase that catalyzes the formation of phosphodiester linkages between 5'-phosphoryl and 3'-hydroxyl groups in double-stranded DNA using NAD as a coenzyme and as the energy source for the reaction. It is essential for DNA replication and repair of damaged DNA. This Paraburkholderia phytofirmans (strain DSM 17436 / LMG 22146 / PsJN) (Burkholderia phytofirmans) protein is DNA ligase.